The sequence spans 170 residues: MTDYIKDKAIAADFSSVQFRFDNYLKQNFNFGRSALLNSGNGRDSGSKMGSVVCKHWLRGLCKKGEQCDFLHEYNLKKMPPCHFYAERGWCSNGEECLYLHLDPSKQVGVCAWYNMGFCPLGPICRGKHVRKPRPCPKYLAGFCPLGPNCPDAHPKHSEPPHPPQKRKDW.

4 C3H1-type zinc fingers span residues 48–75 (KMGS…HEYN), 76–104 (LKKM…HLDP), 105–130 (SKQV…GKHV), and 131–157 (RKPR…HPKH).

Belongs to the CPSF4/YTH1 family.

The protein resides in the nucleus. Its function is as follows. Component of the cleavage factor I (CF I) involved in pre-mRNA 3'-end processing. The sequence is that of mRNA 3'-end-processing protein yth1 (yth1) from Schizosaccharomyces pombe (strain 972 / ATCC 24843) (Fission yeast).